Consider the following 322-residue polypeptide: Carnosine N-methyltransferase 2 (322 aa).

Residue glutamate 58 coordinates substrate. Glycine 90, glutamate 119, serine 150, and isoleucine 172 together coordinate S-adenosyl-L-methionine. Asparagine 313 provides a ligand contact to substrate.

This sequence belongs to the class I-like SAM-binding methyltransferase superfamily. HNMT family. As to quaternary structure, monomer.

It carries out the reaction carnosine + S-adenosyl-L-methionine = anserine + S-adenosyl-L-homocysteine + H(+). Functionally, N-methyltransferase that mediates the formation of anserine (beta-alanyl-N(Pi)-methyl-L-histidine) from carnosine. Anserine, a methylated derivative of carnosine (beta-alanyl-L-histidine), is an abundant constituent of vertebrate skeletal muscles. This Gallus gallus (Chicken) protein is Carnosine N-methyltransferase 2.